The sequence spans 292 residues: Protease HtpX (292 aa).

2 helical membrane-spanning segments follow: residues 4–24 (IILFLLTNLAVMLTFSLILAV) and 32–52 (IYGLLIMSSLFGFSGSILSLI). Residue histidine 139 participates in Zn(2+) binding. The active site involves glutamate 140. Histidine 143 is a binding site for Zn(2+). 2 helical membrane-spanning segments follow: residues 150–170 (ITMTLVQGVVNTFVIFISRII) and 193–213 (FLFFLISTFLEIIFGVLASII). Position 222 (glutamate 222) interacts with Zn(2+).

Belongs to the peptidase M48B family. Zn(2+) serves as cofactor.

The protein localises to the cell membrane. This is Protease HtpX from Buchnera aphidicola subsp. Schizaphis graminum (strain Sg).